Reading from the N-terminus, the 228-residue chain is Ribonuclease 3 (228 aa).

In terms of domain architecture, RNase III spans 2 to 130 (LTYLEQKINY…LLAAVYLDGG (129 aa)). Residue E43 participates in Mg(2+) binding. The active site involves D47. Mg(2+) is bound by residues D116 and E119. E119 is a catalytic residue. The 70-residue stretch at 157 to 226 (DYKTRLQEVV…AMEALSKLGI (70 aa)) folds into the DRBM domain.

Belongs to the ribonuclease III family. Homodimer. It depends on Mg(2+) as a cofactor.

Its subcellular location is the cytoplasm. It catalyses the reaction Endonucleolytic cleavage to 5'-phosphomonoester.. Its function is as follows. Digests double-stranded RNA. Involved in the processing of primary rRNA transcript to yield the immediate precursors to the large and small rRNAs (23S and 16S). Processes some mRNAs, and tRNAs when they are encoded in the rRNA operon. Processes pre-crRNA and tracrRNA of type II CRISPR loci if present in the organism. The sequence is that of Ribonuclease 3 from Caldanaerobacter subterraneus subsp. tengcongensis (strain DSM 15242 / JCM 11007 / NBRC 100824 / MB4) (Thermoanaerobacter tengcongensis).